Reading from the N-terminus, the 173-residue chain is Crossover junction endodeoxyribonuclease RuvC (173 aa).

Residues D8, E67, and D139 contribute to the active site. D8, E67, and D139 together coordinate Mg(2+).

The protein belongs to the RuvC family. Homodimer which binds Holliday junction (HJ) DNA. The HJ becomes 2-fold symmetrical on binding to RuvC with unstacked arms; it has a different conformation from HJ DNA in complex with RuvA. In the full resolvosome a probable DNA-RuvA(4)-RuvB(12)-RuvC(2) complex forms which resolves the HJ. Mg(2+) is required as a cofactor.

Its subcellular location is the cytoplasm. It carries out the reaction Endonucleolytic cleavage at a junction such as a reciprocal single-stranded crossover between two homologous DNA duplexes (Holliday junction).. In terms of biological role, the RuvA-RuvB-RuvC complex processes Holliday junction (HJ) DNA during genetic recombination and DNA repair. Endonuclease that resolves HJ intermediates. Cleaves cruciform DNA by making single-stranded nicks across the HJ at symmetrical positions within the homologous arms, yielding a 5'-phosphate and a 3'-hydroxyl group; requires a central core of homology in the junction. The consensus cleavage sequence is 5'-(A/T)TT(C/G)-3'. Cleavage occurs on the 3'-side of the TT dinucleotide at the point of strand exchange. HJ branch migration catalyzed by RuvA-RuvB allows RuvC to scan DNA until it finds its consensus sequence, where it cleaves and resolves the cruciform DNA. In Salmonella paratyphi C (strain RKS4594), this protein is Crossover junction endodeoxyribonuclease RuvC.